The chain runs to 522 residues: Sorting nexin-1 (522 aa).

2 disordered regions span residues 1-89 (MASG…QDLF) and 115-142 (SLPPQEAPNSSKHQPTYEELEEEEQEDQ). Ser-32 and Ser-39 each carry phosphoserine. Over residues 35 to 45 (EAGDSDTEGED) the composition is skewed to acidic residues. Thr-41 and Thr-48 each carry phosphothreonine. Phosphoserine occurs at positions 58 and 72. Polar residues predominate over residues 60 to 73 (KRTTSLLPINNGSK). The span at 132–142 (EELEEEEQEDQ) shows a compositional bias: acidic residues. The region spanning 143–272 (FDLTVGITDP…EFLEKEELPR (130 aa)) is the PX domain. The a 1,2-diacyl-sn-glycero-3-phospho-(1D-myo-inositol-3-phosphate) site is built by Arg-186, Ser-188, and Lys-214. Position 188 is a phosphoserine (Ser-188). Lys-237 carries the post-translational modification N6-acetyllysine. Arg-238 contacts a 1,2-diacyl-sn-glycero-3-phospho-(1D-myo-inositol-3-phosphate). Ser-280 is subject to Phosphoserine. The tract at residues 281–298 (GAGLLKMFNKATDAVSKM) is membrane-binding amphipathic helix. Residues 302-522 (MNESDIWFEE…AFLPEAKAIS (221 aa)) form the BAR domain.

It belongs to the sorting nexin family. Predominantly forms heterodimers with BAR domain-containing sorting nexins SNX5, SNX6 and SNX32; can self-associate to form homodimers. The heterodimers are proposed to self-assemble into helical arrays on the membrane to stabilize and expand local membrane curvature underlying endosomal tubule formation. Thought to be a component of the originally described retromer complex (also called SNX-BAR retromer) which is a pentamer containing the heterotrimeric retromer cargo-selective complex (CSC), also described as vacuolar protein sorting subcomplex (VPS) and a heterodimeric membrane-deforming subcomplex formed between SNX1 or SNX2 and SNX5 or SNX6 (also called SNX-BAR subcomplex); the respective CSC and SNX-BAR subcomplexes associate with low affinity. Interacts with SNX5, SNX6, SNX32, VPS26A, VPS29, VPS35, DRD5, DENND5A, KALRN, RHOG (GDP-bound form). The interaction with SNX2 is reported controversially. Interacts with DNAJC13; prevented by presence of HGS. Interacts with HGS.

The protein resides in the endosome membrane. It localises to the golgi apparatus. It is found in the trans-Golgi network membrane. Its subcellular location is the early endosome membrane. The protein localises to the cell projection. The protein resides in the lamellipodium. Functionally, involved in several stages of intracellular trafficking. Interacts with membranes containing phosphatidylinositol 3-phosphate (PtdIns(3P)) or phosphatidylinositol 3,5-bisphosphate (PtdIns(3,5)P2). Acts in part as component of the retromer membrane-deforming SNX-BAR subcomplex. The SNX-BAR retromer mediates retrograde transport of cargo proteins from endosomes to the trans-Golgi network (TGN) and is involved in endosome-to-plasma membrane transport for cargo protein recycling. The SNX-BAR subcomplex functions to deform the donor membrane into a tubular profile called endosome-to-TGN transport carrier (ETC). Can sense membrane curvature and has in vitro vesicle-to-membrane remodeling activity. Involved in retrograde endosome-to-TGN transport of lysosomal enzyme receptors (IGF2R, M6PR and SORT1). Plays a role in targeting ligand-activated EGFR to the lysosomes for degradation after endocytosis from the cell surface and release from the Golgi. Involvement in retromer-independent endocytic trafficking of P2RY1 and lysosomal degradation of protease-activated receptor-1/F2R. Promotes KALRN- and RHOG-dependent but retromer-independent membrane remodeling such as lamellipodium formation; the function is dependent on GEF activity of KALRN. Required for endocytosis of DRD5 upon agonist stimulation but not for basal receptor trafficking. This Macaca fascicularis (Crab-eating macaque) protein is Sorting nexin-1 (SNX1).